The sequence spans 232 residues: Ubiquitin-conjugating enzyme E2-24 kDa (232 aa).

Residues 1-37 (MSSTPAAGSAAEVATSSATSNAPSAPSTTASNVSNTS) show a composition bias toward low complexity. Positions 1–87 (MSSTPAAGSA…PRISRALGTS (87 aa)) are disordered. The span at 58 to 67 (GASGSNAGGG) shows a compositional bias: gly residues. Positions 86–232 (TSAKRIQKEL…ARLWTKRYAT (147 aa)) constitute a UBC core domain. Cys170 serves as the catalytic Glycyl thioester intermediate.

This sequence belongs to the ubiquitin-conjugating enzyme family.

The enzyme catalyses S-ubiquitinyl-[E1 ubiquitin-activating enzyme]-L-cysteine + [E2 ubiquitin-conjugating enzyme]-L-cysteine = [E1 ubiquitin-activating enzyme]-L-cysteine + S-ubiquitinyl-[E2 ubiquitin-conjugating enzyme]-L-cysteine.. Its pathway is protein modification; protein ubiquitination. In terms of biological role, catalyzes the covalent attachment of ubiquitin to other proteins. The polypeptide is Ubiquitin-conjugating enzyme E2-24 kDa (Drosophila melanogaster (Fruit fly)).